A 226-amino-acid chain; its full sequence is ATP synthase subunit a (226 aa).

A run of 7 helical transmembrane segments spans residues 18–38 (FIIG…ARYA), 44–64 (VVPS…ISFA), 79–99 (LAAT…IPGF), 105–125 (SWSF…FEGI), 137–157 (FMGP…ISHF), 177–197 (FLLV…FAIL), and 202–222 (LLQA…AVVV).

This sequence belongs to the ATPase A chain family. F-type ATPases have 2 components, CF(1) - the catalytic core - and CF(0) - the membrane proton channel. CF(1) has five subunits: alpha(3), beta(3), gamma(1), delta(1), epsilon(1). CF(0) has three main subunits: a(1), b(2) and c(9-12). The alpha and beta chains form an alternating ring which encloses part of the gamma chain. CF(1) is attached to CF(0) by a central stalk formed by the gamma and epsilon chains, while a peripheral stalk is formed by the delta and b chains.

The protein localises to the cell inner membrane. Functionally, key component of the proton channel; it plays a direct role in the translocation of protons across the membrane. This is ATP synthase subunit a from Helicobacter hepaticus (strain ATCC 51449 / 3B1).